Here is a 434-residue protein sequence, read N- to C-terminus: Beta-enolase (434 aa).

The residue at position 2 (A2) is an N-acetylalanine. T72 is modified (phosphothreonine). Phosphoserine occurs at positions 83 and 157. 2 residues coordinate substrate: H158 and E167. The residue at position 176 (S176) is a Phosphoserine. T205 carries the post-translational modification Phosphothreonine. The active-site Proton donor is E210. T229 is subject to Phosphothreonine. Y236 is modified (phosphotyrosine). D245 contacts Mg(2+). The residue at position 263 (S263) is a Phosphoserine. The substrate site is built by E293 and D318. The Mg(2+) site is built by E293 and D318. The active-site Proton acceptor is the K343. Substrate is bound by residues 370-373 (SHRS) and K394.

It belongs to the enolase family. As to quaternary structure, mammalian enolase is composed of 3 isozyme subunits, alpha, beta and gamma, which can form homodimers or heterodimers which are cell-type and development-specific. Interacts with PNKD. Mg(2+) serves as cofactor.

It is found in the cytoplasm. It catalyses the reaction (2R)-2-phosphoglycerate = phosphoenolpyruvate + H2O. The protein operates within carbohydrate degradation; glycolysis; pyruvate from D-glyceraldehyde 3-phosphate: step 4/5. Glycolytic enzyme that catalyzes the conversion of 2-phosphoglycerate to phosphoenolpyruvate. Appears to have a function in striated muscle development and regeneration. The sequence is that of Beta-enolase (ENO3) from Bos taurus (Bovine).